The primary structure comprises 368 residues: 3-dehydroquinate synthase (368 aa).

NAD(+)-binding positions include 112–116 (GVIGD), 136–137 (TT), Lys149, Lys158, and 176–179 (TLIT). Glu191, His256, and His273 together coordinate Zn(2+).

Belongs to the sugar phosphate cyclases superfamily. Dehydroquinate synthase family. Co(2+) serves as cofactor. The cofactor is Zn(2+). It depends on NAD(+) as a cofactor.

Its subcellular location is the cytoplasm. The enzyme catalyses 7-phospho-2-dehydro-3-deoxy-D-arabino-heptonate = 3-dehydroquinate + phosphate. Its pathway is metabolic intermediate biosynthesis; chorismate biosynthesis; chorismate from D-erythrose 4-phosphate and phosphoenolpyruvate: step 2/7. Functionally, catalyzes the conversion of 3-deoxy-D-arabino-heptulosonate 7-phosphate (DAHP) to dehydroquinate (DHQ). The chain is 3-dehydroquinate synthase from Prochlorococcus marinus (strain NATL2A).